Here is a 154-residue protein sequence, read N- to C-terminus: Methylglyoxal synthase (154 aa).

An MGS-like domain is found at 6–154 (SPLPANKAIA…AYMARRAQGN (149 aa)). Residues His-19, Lys-23, 45–48 (TGTT), and 65–66 (SG) each bind substrate. Asp-71 (proton donor/acceptor) is an active-site residue. Residue His-98 participates in substrate binding.

The protein belongs to the methylglyoxal synthase family.

It carries out the reaction dihydroxyacetone phosphate = methylglyoxal + phosphate. In terms of biological role, catalyzes the formation of methylglyoxal from dihydroxyacetone phosphate. This is Methylglyoxal synthase from Cellvibrio japonicus (strain Ueda107) (Pseudomonas fluorescens subsp. cellulosa).